The primary structure comprises 380 residues: O-antigen polymerase (380 aa).

Transmembrane regions (helical) follow at residues 1-21, 27-47, 55-75, 94-114, 132-152, 169-189, 201-221, 229-249, 282-302, 306-326, 332-352, and 353-373; these read MTYF…RLTP, NIVL…TFNE, ATTL…YILI, YIYW…IILL, SISG…MYLA, FLLA…VYIV, LIYG…LGKF, IISA…AAFN, ILPW…FAPW, LGLY…GIWF, LAVG…FFQE, and HYLL…LLAM.

The protein localises to the cell inner membrane. It catalyses the reaction n lipid-linked O-antigen repeat units = a lipid-linked O antigen + (n-1) polyisoprenyl diphosphate.. Its pathway is bacterial outer membrane biogenesis; LPS O-antigen biosynthesis. Functionally, polymerase involved in the biosynthesis of the lipopolysaccharide (LPS). Catalyzes the polymerization of the O-antigen repeat units on the periplasmic face of the inner membrane, leading to the formation of the lipid-linked O-antigen molecule. This Shigella dysenteriae protein is O-antigen polymerase.